Consider the following 89-residue polypeptide: MARMVFCKKYQQELEGLALPPMPGARGKELFETVSKKAWQEWLQHQTMLINEKRLNLMDPDARTYLTEQMEKFLNNENFDAAEGFVPKD.

The protein belongs to the Fe(2+)-trafficking protein family.

Its function is as follows. Could be a mediator in iron transactions between iron acquisition and iron-requiring processes, such as synthesis and/or repair of Fe-S clusters in biosynthetic enzymes. This chain is Probable Fe(2+)-trafficking protein, found in Hahella chejuensis (strain KCTC 2396).